A 141-amino-acid chain; its full sequence is Large ribosomal subunit protein uL11 (141 aa).

Belongs to the universal ribosomal protein uL11 family. Part of the ribosomal stalk of the 50S ribosomal subunit. Interacts with L10 and the large rRNA to form the base of the stalk. L10 forms an elongated spine to which L12 dimers bind in a sequential fashion forming a multimeric L10(L12)X complex. In terms of processing, one or more lysine residues are methylated.

Functionally, forms part of the ribosomal stalk which helps the ribosome interact with GTP-bound translation factors. The protein is Large ribosomal subunit protein uL11 of Chlamydia muridarum (strain MoPn / Nigg).